The sequence spans 650 residues: L-aspartate N-monooxygenase (nitrosuccinate-forming) (650 aa).

The protein belongs to the nitrosuccinic acid synthase family. FAD serves as cofactor.

It carries out the reaction L-aspartate + 3 NADPH + 3 O2 + 2 H(+) = 2-nitrobutanedioate + 3 NADP(+) + 4 H2O. Functionally, involved in the biosynthesis of desferrioxamine derivatives which have iron-binding properties and may act as siderophores. Catalyzes the iterative oxidation of L-aspartic acid to nitrosuccinic acid (2-nitrobutanedioate) via N-hydroxyaspartic acid and nitrososuccinic acid. This chain is L-aspartate N-monooxygenase (nitrosuccinate-forming), found in Streptomyces davaonensis (strain DSM 101723 / JCM 4913 / KCC S-0913 / 768).